Consider the following 295-residue polypeptide: Tyrosine transport system permease protein (295 aa).

A run of 8 helical transmembrane segments spans residues 3–23, 57–77, 81–101, 122–142, 173–193, 200–220, 232–252, and 256–276; these read GIISVMTQSLILSIMALGVYI, VVATLMAILCGCTAGLVTGIL, FKISNLLSGILVMGMLYSINL, ISPIVLALAFVFICKILLDLF, ILGLMISNGLIALSGSLMAQF, NMGIGTLVLGIASIIIGITLF, IIVGSFIYQFTIYFAMSLGML, and LKLITAIVIIAFLATGNLNIS.

Belongs to the binding-protein-dependent transport system permease family. The complex is probably composed of two ATP-binding proteins (CDR20291_0806), two transmembrane proteins (CDR20291_0807) and a solute-binding protein (CDR20291_0805).

The protein localises to the cell membrane. In terms of biological role, probably part of an ABC transporter complex involved in tyrosine uptake. May also import phenylalanine. Probably responsible for the translocation of the substrate across the membrane. The protein is Tyrosine transport system permease protein of Clostridioides difficile (strain R20291) (Peptoclostridium difficile).